Reading from the N-terminus, the 379-residue chain is Guanine nucleotide-binding protein G(s) subunit alpha (379 aa).

A disordered region spans residues 1–25 (MGCLGNSKTEDQRNEEKVQRETNKK). The N-palmitoyl glycine moiety is linked to residue glycine 2. A lipid anchor (S-palmitoyl cysteine) is attached at cysteine 3. Positions 8–25 (KTEDQRNEEKVQRETNKK) are enriched in basic and acidic residues. The region spanning 39–379 (ATHRLLLLGA…RMHLRQYELL (341 aa)) is the G-alpha domain. Residues 42-55 (RLLLLGAGESGKSS) are G1 motif. Residues 47-55 (GAGESGKSS), 182-189 (LLRCRVLT), 208-212 (DVGGQ), 277-280 (NKQD), and alanine 351 contribute to the GTP site. Serine 54 and threonine 189 together coordinate Mg(2+). The tract at residues 181 to 189 (DLLRCRVLT) is G2 motif. The G3 motif stretch occupies residues 204–213 (FHMFDVGGQR). The segment at 273–280 (ILFLNKQD) is G4 motif. The G5 motif stretch occupies residues 349–354 (TCAVDT).

It belongs to the G-alpha family. G(s) subfamily. As to quaternary structure, heterotrimeric G proteins are composed of 3 units; alpha, beta and gamma. The alpha chain contains the guanine nucleotide binding site.

It localises to the cell membrane. Its function is as follows. Guanine nucleotide-binding proteins (G proteins) function as transducers in numerous signaling pathways controlled by G protein-coupled receptors (GPCRs). Signaling involves the activation of adenylyl cyclases, resulting in increased levels of the signaling molecule cAMP. GNAS functions downstream of several GPCRs, including beta-adrenergic receptors. Stimulates the Ras signaling pathway. The sequence is that of Guanine nucleotide-binding protein G(s) subunit alpha (gnas) from Xenopus laevis (African clawed frog).